Consider the following 564-residue polypeptide: Cytochrome P450 monooxygenase fsdH (564 aa).

A helical transmembrane segment spans residues 18–38 (GSVSLAVLSTLAVVIAGWYIL). Residue cysteine 472 coordinates heme.

It belongs to the cytochrome P450 family. Requires heme as cofactor.

Its subcellular location is the membrane. The protein operates within mycotoxin biosynthesis. Its function is as follows. Cytochrome P450 monooxygenase; part of the gene cluster that mediates the biosynthesis of fusaridione A, a bright yellow trans-fused decalin-containing tetramic acid with antimicrobial activity. The PKS module of fsdS catalyzes the formation of the polyketide unit which is then conjugated to L-tyrosine by the condensation domain of the fsdS NRPS module. Activity of the Dieckmann cyclase domain (RED) results in release of the intermediate fusaridione A. The unstable pyrrolidinedione ring of fusaridione A is opened through a reverse-Dieckmann reaction to afford its ring-opened form. This is Cytochrome P450 monooxygenase fsdH from Fusarium heterosporum.